A 435-amino-acid chain; its full sequence is Serine--tRNA ligase (435 aa).

242 to 244 is an L-serine binding site; sequence TAE. ATP is bound at residue 273 to 275; it reads RSE. Position 296 (E296) interacts with L-serine. 360 to 363 provides a ligand contact to ATP; that stretch reads EISS. L-serine is bound at residue S396.

The protein belongs to the class-II aminoacyl-tRNA synthetase family. Type-1 seryl-tRNA synthetase subfamily. As to quaternary structure, homodimer. The tRNA molecule binds across the dimer.

The protein resides in the cytoplasm. It carries out the reaction tRNA(Ser) + L-serine + ATP = L-seryl-tRNA(Ser) + AMP + diphosphate + H(+). It catalyses the reaction tRNA(Sec) + L-serine + ATP = L-seryl-tRNA(Sec) + AMP + diphosphate + H(+). The protein operates within aminoacyl-tRNA biosynthesis; selenocysteinyl-tRNA(Sec) biosynthesis; L-seryl-tRNA(Sec) from L-serine and tRNA(Sec): step 1/1. Catalyzes the attachment of serine to tRNA(Ser). Is also able to aminoacylate tRNA(Sec) with serine, to form the misacylated tRNA L-seryl-tRNA(Sec), which will be further converted into selenocysteinyl-tRNA(Sec). This is Serine--tRNA ligase from Vibrio vulnificus (strain CMCP6).